A 196-amino-acid polypeptide reads, in one-letter code: Nucleoid occlusion factor SlmA (196 aa).

An HTH tetR-type domain is found at serine 7–leucine 68. Positions threonine 31 to phenylalanine 50 form a DNA-binding region, H-T-H motif. A coiled-coil region spans residues glutamate 65 to lysine 142.

This sequence belongs to the nucleoid occlusion factor SlmA family. As to quaternary structure, homodimer. Interacts with FtsZ.

The protein localises to the cytoplasm. Its subcellular location is the nucleoid. Functionally, required for nucleoid occlusion (NO) phenomenon, which prevents Z-ring formation and cell division over the nucleoid. Acts as a DNA-associated cell division inhibitor that binds simultaneously chromosomal DNA and FtsZ, and disrupts the assembly of FtsZ polymers. SlmA-DNA-binding sequences (SBS) are dispersed on non-Ter regions of the chromosome, preventing FtsZ polymerization at these regions. The sequence is that of Nucleoid occlusion factor SlmA from Vibrio vulnificus (strain CMCP6).